The chain runs to 381 residues: Cytochrome b (381 aa).

Helical transmembrane passes span 36–56, 80–101, 116–136, and 181–201; these read FGSLLAMCLIIQIITGLFLTM, WLIRTLHANGASFFFICIYIHI, WMVGVIILFLLMATAFMGYVL, and FYTFHFILPFIILMMTMIHLL. Heme b-binding residues include His-86 and His-100. 2 residues coordinate heme b: His-185 and His-199. His-204 provides a ligand contact to a ubiquinone. The next 4 membrane-spanning stretches (helical) occupy residues 229–249, 291–311, 323–343, and 350–370; these read FKDMIGFIIISFLLIFLTLTN, LGGVIALIMSILILIILPLTF, MNQILFWIMVVTIILLTWIGA, and YVFVGQVLTIMYFSYYIINPM.

The protein belongs to the cytochrome b family. As to quaternary structure, the main subunits of complex b-c1 are: cytochrome b, cytochrome c1 and the Rieske protein. It depends on heme b as a cofactor.

It is found in the mitochondrion inner membrane. Component of the ubiquinol-cytochrome c reductase complex (complex III or cytochrome b-c1 complex) that is part of the mitochondrial respiratory chain. The b-c1 complex mediates electron transfer from ubiquinol to cytochrome c. Contributes to the generation of a proton gradient across the mitochondrial membrane that is then used for ATP synthesis. The polypeptide is Cytochrome b (MT-CYB) (Ostrinia nubilalis (European corn borer)).